Here is a 443-residue protein sequence, read N- to C-terminus: UPF0597 protein DVU_0440 (443 aa).

It belongs to the UPF0597 family.

The protein is UPF0597 protein DVU_0440 of Nitratidesulfovibrio vulgaris (strain ATCC 29579 / DSM 644 / CCUG 34227 / NCIMB 8303 / VKM B-1760 / Hildenborough) (Desulfovibrio vulgaris).